Consider the following 424-residue polypeptide: O-methyltransferase aunD (424 aa).

Asp-275 serves as a coordination point for S-adenosyl-L-methionine. His-326 acts as the Proton acceptor in catalysis.

The protein belongs to the class I-like SAM-binding methyltransferase superfamily. Cation-independent O-methyltransferase family.

Its pathway is secondary metabolite biosynthesis. O-methyltransferase; part of the gene cluster that mediates the biosynthesis of aurasperone B, a dimeric gamma-naphthopyrone. The first step in the biosynthesis of aurasperone B is the production of gamma-naphthopyrone precursor YWA1 by the non-reducing polyketide synthase albA, via condensation of one acetyl-CoA starter unit with 6 malonyl-CoA units. YWA1 is then methylated by aunE at position C-6 to yield foncesin which is further methylated at position C-8 by aunD to produce fonsecin B. A key enzyme in the biosynthetic pathway is the cytochrome P450 monooxygenase aunB which catalyzes the oxidative dimerization of fonsecin B to aurasperone B. AunB also catalyzes the oxidative dimerization of rubrofusarin B into aurasperone A. The chain is O-methyltransferase aunD from Aspergillus niger (strain ATCC MYA-4892 / CBS 513.88 / FGSC A1513).